Reading from the N-terminus, the 674-residue chain is UvrABC system protein B (674 aa).

One can recognise a Helicase ATP-binding domain in the interval 26–183 (EGLEDGLAHQ…RRLAELQYTR (158 aa)). 39–46 (GVTGSGKT) contacts ATP. Residues 92 to 115 (YYDYYQPEAYVPSSDTFIEKDASV) carry the Beta-hairpin motif. The region spanning 431–597 (QVDDLLSEIR…GLNKKISDIL (167 aa)) is the Helicase C-terminal domain. One can recognise a UVR domain in the interval 634–669 (QKRIHQLEAQMQQHAQNLEFEEAAQVRDQLHQVREL).

Belongs to the UvrB family. As to quaternary structure, forms a heterotetramer with UvrA during the search for lesions. Interacts with UvrC in an incision complex.

It localises to the cytoplasm. Functionally, the UvrABC repair system catalyzes the recognition and processing of DNA lesions. A damage recognition complex composed of 2 UvrA and 2 UvrB subunits scans DNA for abnormalities. Upon binding of the UvrA(2)B(2) complex to a putative damaged site, the DNA wraps around one UvrB monomer. DNA wrap is dependent on ATP binding by UvrB and probably causes local melting of the DNA helix, facilitating insertion of UvrB beta-hairpin between the DNA strands. Then UvrB probes one DNA strand for the presence of a lesion. If a lesion is found the UvrA subunits dissociate and the UvrB-DNA preincision complex is formed. This complex is subsequently bound by UvrC and the second UvrB is released. If no lesion is found, the DNA wraps around the other UvrB subunit that will check the other stand for damage. The polypeptide is UvrABC system protein B (Erwinia tasmaniensis (strain DSM 17950 / CFBP 7177 / CIP 109463 / NCPPB 4357 / Et1/99)).